Here is a 240-residue protein sequence, read N- to C-terminus: Short palate, lung and nasal epithelium carcinoma-associated protein 2B (240 aa).

Positions 1-19 (MVQLWKLVLLCGLLAGTSA) are cleaved as a signal peptide. A disulfide bridge connects residues C163 and C206.

It belongs to the BPI/LBP/Plunc superfamily. Plunc family. As to expression, parotid glands.

The protein localises to the secreted. This chain is Short palate, lung and nasal epithelium carcinoma-associated protein 2B (SPLUNC2B), found in Bos taurus (Bovine).